The primary structure comprises 206 residues: Fibroblast growth factor 4 (206 aa).

Residues 1–30 (MSGPGTAAVALLPAVLLALLAPWAGRGGAA) form the signal peptide.

It belongs to the heparin-binding growth factors family. In terms of assembly, interacts with FGFR1, FGFR2, FGFR3 and FGFR4. Affinity between fibroblast growth factors (FGFs) and their receptors is increased by heparan sulfate glycosaminoglycans that function as coreceptors.

It is found in the secreted. In terms of biological role, plays an important role in the regulation of embryonic development, cell proliferation, and cell differentiation. Required for normal limb and cardiac valve development during embryogenesis. May play a role in embryonic molar tooth bud development via inducing the expression of MSX1, MSX2 and MSX1-mediated expression of SDC1 in dental mesenchyme cells. The sequence is that of Fibroblast growth factor 4 from Homo sapiens (Human).